Consider the following 276-residue polypeptide: Pantothenate synthetase (276 aa).

An ATP-binding site is contributed by 27–34; the sequence is MGALHKGH. Residue H34 is the Proton donor of the active site. Q58 contacts (R)-pantoate. Residue Q58 coordinates beta-alanine. An ATP-binding site is contributed by 147–150; the sequence is GKKD. Q153 serves as a coordination point for (R)-pantoate. ATP contacts are provided by residues V176 and 184-187; that span reads LSSR.

The protein belongs to the pantothenate synthetase family. As to quaternary structure, homodimer.

The protein localises to the cytoplasm. The enzyme catalyses (R)-pantoate + beta-alanine + ATP = (R)-pantothenate + AMP + diphosphate + H(+). It functions in the pathway cofactor biosynthesis; (R)-pantothenate biosynthesis; (R)-pantothenate from (R)-pantoate and beta-alanine: step 1/1. Functionally, catalyzes the condensation of pantoate with beta-alanine in an ATP-dependent reaction via a pantoyl-adenylate intermediate. The polypeptide is Pantothenate synthetase (Helicobacter pylori (strain Shi470)).